The following is a 226-amino-acid chain: MMTNLFSVFDPSTTILNLSLNWLSTFLGLFLIPVSYWLMPNRFQVIWNNILLTLHKEFKTLLGPSGHNGSTLMFISLFSLIMFNNFLGLFPYIFTSTSHLTLTLALAFPLWLSFMLYGWINHTQHMFAHLVPQGTPPVLMPFMVCIETISNVIRPGTLAVRLTANMIAGHLLLTLLGNTGPMASNYLILSLILTTQIALLVLESAVAIIQSYVFAVLSTLYSSEVN.

A run of 5 helical transmembrane segments spans residues 18–38 (LSLN…SYWL), 74–94 (FISL…PYIF), 100–120 (LTLT…YGWI), 158–180 (LAVR…GNTG), and 197–217 (IALL…FAVL).

It belongs to the ATPase A chain family. As to quaternary structure, F-type ATPases have 2 components, CF(1) - the catalytic core - and CF(0) - the membrane proton channel. CF(1) has five subunits: alpha(3), beta(3), gamma(1), delta(1), epsilon(1). CF(0) has three main subunits: a, b and c.

The protein resides in the mitochondrion inner membrane. In terms of biological role, mitochondrial membrane ATP synthase (F(1)F(0) ATP synthase or Complex V) produces ATP from ADP in the presence of a proton gradient across the membrane which is generated by electron transport complexes of the respiratory chain. F-type ATPases consist of two structural domains, F(1) - containing the extramembraneous catalytic core and F(0) - containing the membrane proton channel, linked together by a central stalk and a peripheral stalk. During catalysis, ATP synthesis in the catalytic domain of F(1) is coupled via a rotary mechanism of the central stalk subunits to proton translocation. Key component of the proton channel; it may play a direct role in the translocation of protons across the membrane. In Anopheles gambiae (African malaria mosquito), this protein is ATP synthase subunit a (mt:ATPase6).